We begin with the raw amino-acid sequence, 496 residues long: Protein RepS (496 aa).

Residues 120-141 (SDILTTAIDLGFMPTLIIKSDK) mediate DNA binding.

Functionally, essential for replication. The polypeptide is Protein RepS (repS) (Streptococcus pyogenes).